A 416-amino-acid polypeptide reads, in one-letter code: Methylthioribose-1-phosphate isomerase (416 aa).

The active-site Proton donor is Asp-280.

It belongs to the eIF-2B alpha/beta/delta subunits family. MtnA subfamily.

It localises to the cytoplasm. The protein resides in the nucleus. The enzyme catalyses 5-(methylsulfanyl)-alpha-D-ribose 1-phosphate = 5-(methylsulfanyl)-D-ribulose 1-phosphate. The protein operates within amino-acid biosynthesis; L-methionine biosynthesis via salvage pathway; L-methionine from S-methyl-5-thio-alpha-D-ribose 1-phosphate: step 1/6. Its function is as follows. Catalyzes the interconversion of methylthioribose-1-phosphate (MTR-1-P) into methylthioribulose-1-phosphate (MTRu-1-P). This Candida albicans (strain SC5314 / ATCC MYA-2876) (Yeast) protein is Methylthioribose-1-phosphate isomerase.